The following is a 61-amino-acid chain: Large ribosomal subunit protein uL30 (61 aa).

This sequence belongs to the universal ribosomal protein uL30 family. In terms of assembly, part of the 50S ribosomal subunit.

The polypeptide is Large ribosomal subunit protein uL30 (Thermobifida fusca (strain YX)).